The chain runs to 476 residues: TOM1-like protein 1 (476 aa).

The 133-residue stretch at 22–154 folds into the VHS domain; the sequence is ATFAGVQTED…DLVKKGVQFP (133 aa). The interval 155 to 179 is disordered; that stretch reads PSEAEAETARQETAQISSNPPTSVP. The segment covering 170–179 has biased composition (polar residues); the sequence is ISSNPPTSVP. The residue at position 171 (serine 171) is a Phosphoserine. Residues 200 to 288 enclose the GAT domain; it reads EQIGKLHSEL…AILGYERFTR (89 aa). A compositionally biased stretch (polar residues) spans 298–314; that stretch reads KNQKEATNTTSEPSAPS. The disordered stretch occupies residues 298–327; sequence KNQKEATNTTSEPSAPSQDLLDLSPSPRMP. 3 positions are modified to phosphoserine: serine 314, serine 321, and serine 323. Positions 392 to 395 are interaction with GRB2; it reads YDNF. Positions 421–425 match the SH3-binding motif; sequence LPPLP. The segment at 442–445 is interaction with PIK3R1; it reads YEVM. Tyrosine 460 bears the Phosphotyrosine mark. Residues 460 to 463 carry the SH2-binding motif; it reads YEEI.

This sequence belongs to the TOM1 family. As to quaternary structure, interacts with FYN, GRB2 and PIK3R1 when phosphorylated. Interacts with LYN. Post-translationally, phosphorylated on tyrosines by FYN and LYN.

The protein resides in the golgi apparatus. Its subcellular location is the golgi stack. It is found in the endosome membrane. It localises to the cytoplasm. The protein localises to the membrane. Its function is as follows. Probable adapter protein involved in signaling pathways. Interacts with the SH2 and SH3 domains of various signaling proteins when it is phosphorylated. May promote FYN activation, possibly by disrupting intramolecular SH3-dependent interactions. The sequence is that of TOM1-like protein 1 (TOM1L1) from Homo sapiens (Human).